The following is a 264-amino-acid chain: NAD kinase 1 (264 aa).

Catalysis depends on D45, which acts as the Proton acceptor. Residues 45–46, 122–123, R148, D150, 161–166, and A185 each bind NAD(+); these read DG, NE, and TAYNKS.

The protein belongs to the NAD kinase family. It depends on a divalent metal cation as a cofactor.

Its subcellular location is the cytoplasm. It catalyses the reaction NAD(+) + ATP = ADP + NADP(+) + H(+). In terms of biological role, involved in the regulation of the intracellular balance of NAD and NADP, and is a key enzyme in the biosynthesis of NADP. Catalyzes specifically the phosphorylation on 2'-hydroxyl of the adenosine moiety of NAD to yield NADP. The polypeptide is NAD kinase 1 (Listeria monocytogenes serotype 4b (strain F2365)).